A 148-amino-acid polypeptide reads, in one-letter code: uncharacterized protein (148 aa).

The tract at residues 38-99 (QFRRHHHAEH…RRHLRKGHLK (62 aa)) is disordered. Residues 64–82 (FHHDGGRHGHATRIHENNR) show a composition bias toward basic and acidic residues. Basic residues predominate over residues 83-99 (RPHKRNRRRHLRKGHLK).

This is an uncharacterized protein from Fowl adenovirus A serotype 1 (strain CELO / Phelps) (FAdV-1).